We begin with the raw amino-acid sequence, 575 residues long: Adenine deaminase 1 (575 aa).

This sequence belongs to the metallo-dependent hydrolases superfamily. Adenine deaminase family. Mn(2+) serves as cofactor.

The enzyme catalyses adenine + H2O + H(+) = hypoxanthine + NH4(+). The protein is Adenine deaminase 1 of Agrobacterium fabrum (strain C58 / ATCC 33970) (Agrobacterium tumefaciens (strain C58)).